The sequence spans 346 residues: Phosphoribosylformylglycinamidine cyclo-ligase (346 aa).

This sequence belongs to the AIR synthase family.

Its subcellular location is the cytoplasm. It carries out the reaction 2-formamido-N(1)-(5-O-phospho-beta-D-ribosyl)acetamidine + ATP = 5-amino-1-(5-phospho-beta-D-ribosyl)imidazole + ADP + phosphate + H(+). Its pathway is purine metabolism; IMP biosynthesis via de novo pathway; 5-amino-1-(5-phospho-D-ribosyl)imidazole from N(2)-formyl-N(1)-(5-phospho-D-ribosyl)glycinamide: step 2/2. This is Phosphoribosylformylglycinamidine cyclo-ligase from Erwinia tasmaniensis (strain DSM 17950 / CFBP 7177 / CIP 109463 / NCPPB 4357 / Et1/99).